Consider the following 283-residue polypeptide: 3-methyl-2-oxobutanoate hydroxymethyltransferase (283 aa).

Asp-44 and Asp-83 together coordinate Mg(2+). Residues 44–45, Asp-83, and Lys-112 each bind 3-methyl-2-oxobutanoate; that span reads DS. Glu-114 provides a ligand contact to Mg(2+). The Proton acceptor role is filled by Glu-181.

This sequence belongs to the PanB family. In terms of assembly, homodecamer; pentamer of dimers. The cofactor is Mg(2+).

It is found in the cytoplasm. The catalysed reaction is 3-methyl-2-oxobutanoate + (6R)-5,10-methylene-5,6,7,8-tetrahydrofolate + H2O = 2-dehydropantoate + (6S)-5,6,7,8-tetrahydrofolate. It participates in cofactor biosynthesis; coenzyme A biosynthesis. Catalyzes the reversible reaction in which hydroxymethyl group from 5,10-methylenetetrahydrofolate is transferred onto alpha-ketoisovalerate to form ketopantoate. The protein is 3-methyl-2-oxobutanoate hydroxymethyltransferase of Pyrococcus furiosus (strain ATCC 43587 / DSM 3638 / JCM 8422 / Vc1).